The chain runs to 70 residues: Small ribosomal subunit protein bS21 (70 aa).

Belongs to the bacterial ribosomal protein bS21 family.

This is Small ribosomal subunit protein bS21 from Neisseria gonorrhoeae (strain ATCC 700825 / FA 1090).